Consider the following 940-residue polypeptide: Reticulon-3 (940 aa).

Positions 1–24 are enriched in low complexity; it reads MAESSAATQSPSVSSSSSGAEPST. 3 disordered regions span residues 1-32, 71-91, and 129-182; these read MAES…GGSP, SSEI…LGSH, and DIPC…ALDL. Position 2 is an N-acetylalanine (Ala2). Topologically, residues 2-771 are cytoplasmic; sequence AESSAATQSP…KKTGFVFGTT (770 aa). Ser31 bears the Phosphoserine mark. Residues Ser196, Ser204, Ser209, Ser212, Ser249, and Ser282 each carry the phosphoserine modification. Disordered regions lie at residues 314–335, 381–405, and 428–512; these read AKQQ…RSEH, KGYL…ISGS, and EVTE…LEGQ. Acidic residues predominate over residues 430 to 447; it reads TEVDSSGESDDTVIEDTT. Basic and acidic residues predominate over residues 472–490; that stretch reads TSERENKETTSHETVRSEM. The span at 491-512 shows a compositional bias: polar residues; the sequence is YENSEQQQAHAETPTQRSLEGQ. Ser508 bears the Phosphoserine mark. Thr572 carries the post-translational modification Phosphothreonine. A phosphoserine mark is found at Ser575, Ser576, and Ser652. Disordered stretches follow at residues 623–655 and 672–701; these read NKLS…SSDL and QVQA…SDIL. A compositionally biased stretch (polar residues) spans 689 to 699; sequence DPQSGPQNSSD. Positions 752–940 constitute a Reticulon domain; that stretch reads VHDLIFWRDV…LPGIAKKKAE (189 aa). Residues 772-795 constitute an intramembrane region (helical); it reads LIMLLSLAAFSVISVVSYLILALL. The Cytoplasmic segment spans residues 796 to 852; the sequence is SVTISFRVYKSVIQAVQKSEEGHPFKAYLDVDITLSSEAFHSYMNAAMVHVNKALKL. Positions 853 to 875 form an intramembrane region, helical; sequence IIRLFLVEDLVDSLKLAVFMWLM. Over 876–879 the chain is Cytoplasmic; the sequence is TYVG. The segment at residues 880–902 is an intramembrane region (helical); sequence AVFNGITLLILAELLVFSVPIVY. Residues 895-940 form an interaction with FADD region; the sequence is VFSVPIVYEKYKTQIDHYVGIARDQTKSIVEKIQAKLPGIAKKKAE. Residues 903 to 940 lie on the Cytoplasmic side of the membrane; it reads EKYKTQIDHYVGIARDQTKSIVEKIQAKLPGIAKKKAE. Residues 908–910 are interaction with BACE1; that stretch reads QID.

Homodimer. Interacts with RTN4. Isoform 2 interacts with BACE1, BACE2, BCL2 and FADD. Interacts with ATL2. Interacts with TMEM33. Interacts with ATL1. Interacts with ZFYVE27 and with KIF5A in a ZFYVE27-dependent manner. Interacts with RIGI. Interacts with TRIM25. In terms of tissue distribution, present in olfactory bulb, olfactory epithelium and retina (at protein level).

It localises to the endoplasmic reticulum membrane. The protein resides in the golgi apparatus membrane. In terms of biological role, may be involved in membrane trafficking in the early secretory pathway. Inhibits BACE1 activity and amyloid precursor protein processing. May induce caspase-8 cascade and apoptosis. May favor BCL2 translocation to the mitochondria upon endoplasmic reticulum stress. Induces the formation of endoplasmic reticulum tubules. Acts also as an inflammation-resolving regulator by interacting with both TRIM25 and RIGI, subsequently impairing RIGI 'Lys-63'-linked polyubiquitination leading to IRF3 and NF-kappa-B inhibition. This Rattus norvegicus (Rat) protein is Reticulon-3 (Rtn3).